A 79-amino-acid polypeptide reads, in one-letter code: Hemoglobin subunit zeta (79 aa).

An N-acetylserine modification is found at Ser1. The Globin domain occupies 1 to 79; that stretch reads SLTKTXXTII…FKLLSHXFLV (79 aa). Ser38 and Ser53 each carry phosphoserine. Residue His59 participates in heme b binding.

The protein belongs to the globin family. Heterotetramer of two zeta chains and two epsilon chains.

Its function is as follows. The zeta chain is an alpha-type chain of mammalian embryonic hemoglobin. In Notamacropus eugenii (Tammar wallaby), this protein is Hemoglobin subunit zeta.